The following is a 173-amino-acid chain: Calcineurin subunit B (173 aa).

EF-hand domains are found at residues 20-55 (DEID…AANP), 59-87 (RLMD…FSTK), 89-124 (NKKE…MVGN), and 130-165 (QLQQ…TNVY). Ca(2+) is bound by residues D33, D35, S37, E44, D65, N67, S69, D71, E76, D102, D104, D106, Y108, E113, D143, D145, D147, K149, and E154.

The protein belongs to the calcineurin regulatory subunit family. As to quaternary structure, composed of a catalytic subunit (A) and a regulatory subunit (B).

Regulatory subunit of calcineurin, a calcium-dependent, calmodulin stimulated protein phosphatase. Confers calcium sensitivity. The polypeptide is Calcineurin subunit B (CNB1) (Yarrowia lipolytica (strain CLIB 122 / E 150) (Yeast)).